The chain runs to 621 residues: TOX high mobility group box family member 4 (621 aa).

Disordered regions lie at residues 153–227 (LGLS…QKPV) and 305–333 (LDPA…ASIE). T176 carries the post-translational modification Phosphothreonine. Phosphoserine is present on residues S178, S181, and S182. Residues 183 to 193 (LHEDGVEDFRR) show a composition bias toward basic and acidic residues. Residues 208–218 (KQKAPKKRKKK) are compositionally biased toward basic residues. The short motif at 213–218 (KKRKKK) is the Nuclear localization signal element. A DNA-binding region (HMG box) is located at residues 223–291 (PQKPVSAYAL…EYLKALAAYK (69 aa)). Over residues 307–319 (PAPPSQTPSPPPM) the composition is skewed to pro residues. T313 bears the Phosphothreonine mark. S315 is subject to Phosphoserine. Over residues 320 to 333 (ATVDPASPAPASIE) the composition is skewed to low complexity. The residue at position 481 (R481) is an Asymmetric dimethylarginine. Residues 510–529 (PTVESSPERPMNNSPEAHTV) are disordered. Phosphoserine occurs at positions 533, 550, 552, 560, 562, and 567.

As to quaternary structure, component of the PNUTS-PP1 phosphatase complex, composed of PPP1R10/PNUTS, TOX4, WDR82 and PPP1CA or PPP1CB or PPP1CC. Interacts with PPP1R10/PNUTS. Interacts with FOXO1 and CREB1 (increased by cAMP); FOXO1 and CREB1 are required for full induction of TOX4-dependent activity and the interactions are inhibited by insulin.

The protein localises to the nucleus. It is found in the chromosome. Its activity is regulated as follows. In liver, recruited to target gene promoters following treatment with dexamethasone and cAMP. Binding is decreased in presence of insulin. Its function is as follows. Transcription factor that modulates cell fate reprogramming from the somatic state to the pluripotent and neuronal fate. In liver, controls the expression of hormone-regulated gluconeogenic genes such as G6PC1 and PCK1. This regulation is independent of the insulin receptor activation. Also acts as a regulatory component of protein phosphatase 1 (PP1) complexes. Component of the PNUTS-PP1 protein phosphatase complex, a PP1 complex that regulates RNA polymerase II transcription pause-release. PNUTS-PP1 also plays a role in the control of chromatin structure and cell cycle progression during the transition from mitosis into interphase. This is TOX high mobility group box family member 4 (TOX4) from Pongo abelii (Sumatran orangutan).